A 627-amino-acid polypeptide reads, in one-letter code: MDKNTVIGLVLIGLVIFGFSWLNRPDPQEIEAQRKAAIEAARQDSIAKAEAELLAARTQEATPDSIKQAAGYNQYGLLAAATAGAEEQVELANGKIALKLSTKGGAIREVLLRDYKTYDGKPLYLFREGESDFNLPLRTLDNRLVDTRDLYFSPISRTDSSVVMRLAVDSASYLDLAYVLLPDDYRLRMTVSGQNLQSLFPANMTMQDLEWSQRIRRQEKSWKFENQYTSIYYKYSGDEVDRLSDSKQEDKKTLEEPLHWVSFKDKYFASVLVCDSYFENNKLAQKTAAAGSDYLKNCTMSATFPLDVRPGTKAGFTFFFGPLKYNMLRAYDKGMKAEDNLDLDHLVYLGASIFRWINRYMIIPASTFLQQYFSNWGLIILLLTLGIKLLISPLAYKGYLSSAKMRLLRPQVQEINAKYPGKDQESMMKRQSATMNLYRAAGAGPMSGCLPMLLQFPFLIAMYMYFPTTIDIRQQSFLWAEDLSSYDAVFSWTADIPLLSQFYGNHVSLFCLLMSISNILYIRYTMNQSDTGQEGMAMLKWMPYITTVMFLFFFNQNASGLCYYYFLSSIITVIQYMSSRFIINEEKLMAKLEANKTKPRKKSKWMARLEEAQRQQEAMRRQQQKRK.

The next 6 membrane-spanning stretches (helical) occupy residues 3–23 (KNTV…SWLN), 376–396 (WGLI…PLAY), 450–470 (LPML…PTTI), 502–522 (FYGN…ILYI), 534–554 (EGMA…LFFF), and 558–578 (ASGL…QYMS).

The protein belongs to the OXA1/ALB3/YidC family. Type 1 subfamily. Interacts with the Sec translocase complex via SecD. Specifically interacts with transmembrane segments of nascent integral membrane proteins during membrane integration.

The protein resides in the cell inner membrane. Functionally, required for the insertion and/or proper folding and/or complex formation of integral membrane proteins into the membrane. Involved in integration of membrane proteins that insert both dependently and independently of the Sec translocase complex, as well as at least some lipoproteins. Aids folding of multispanning membrane proteins. This Porphyromonas gingivalis (strain ATCC 33277 / DSM 20709 / CIP 103683 / JCM 12257 / NCTC 11834 / 2561) protein is Membrane protein insertase YidC.